The chain runs to 819 residues: Aminopeptidase O (819 aa).

His-479 contributes to the Zn(2+) binding site. The active-site Proton acceptor is the Glu-480. Zn(2+) is bound by residues His-483 and Glu-502. The short motif at Arg-689–Lys-699 is the Nucleolar localization signal element.

Belongs to the peptidase M1 family. It depends on Zn(2+) as a cofactor.

Its subcellular location is the nucleus. The protein localises to the nucleolus. It is found in the cytoplasm. Functionally, aminopeptidase which catalyzes the hydrolysis of amino acid residues from the N-terminus of peptide or protein substrates. This is Aminopeptidase O from Homo sapiens (Human).